The sequence spans 314 residues: Mitochondrial MRF1 N(5)-glutamine methyltransferase MTQ1 (314 aa).

S-adenosyl-L-methionine contacts are provided by residues 118–122, D141, and N188; that span reads FTGTG. 188-191 contributes to the substrate binding site; that stretch reads NPPY.

This sequence belongs to the protein N5-glutamine methyltransferase family.

It localises to the mitochondrion. The catalysed reaction is L-glutaminyl-[peptide chain release factor] + S-adenosyl-L-methionine = N(5)-methyl-L-glutaminyl-[peptide chain release factor] + S-adenosyl-L-homocysteine + H(+). In terms of biological role, methylates MRF1 on 'Gln-287' using S-adenosyl L-methionine as methyl donor. The sequence is that of Mitochondrial MRF1 N(5)-glutamine methyltransferase MTQ1 (MTQ1) from Saccharomyces cerevisiae (strain ATCC 204508 / S288c) (Baker's yeast).